The sequence spans 378 residues: RIB43A-like with coiled-coils protein 1 (378 aa).

Coiled-coil stretches lie at residues 153–250 (RMQQ…VTSD) and 279–334 (EQRA…CAEF).

The protein belongs to the RIB43A family. As to quaternary structure, microtubule inner protein component of sperm flagellar doublet microtubules.

Its subcellular location is the cytoplasm. It localises to the cytoskeleton. The protein localises to the flagellum axoneme. In Rattus norvegicus (Rat), this protein is RIB43A-like with coiled-coils protein 1 (Ribc1).